Reading from the N-terminus, the 296-residue chain is Sulfotransferase 1E1 (296 aa).

49–54 (KSGTTW) is a 3'-phosphoadenylyl sulfate binding site. 107-109 (KTH) provides a ligand contact to substrate. Histidine 109 functions as the Proton acceptor in the catalytic mechanism. Residues arginine 131, serine 139, tyrosine 194, 228-233 (TSFQEM), and 258-260 (RKG) contribute to the 3'-phosphoadenylyl sulfate site.

Belongs to the sulfotransferase 1 family. As to quaternary structure, homodimer. The N-terminus is blocked. In terms of tissue distribution, adrenal gland and much less in liver. Detectable only during pregnancy in uterine.

It localises to the cytoplasm. The protein localises to the cytosol. It catalyses the reaction estrone + 3'-phosphoadenylyl sulfate = estrone 3-sulfate + adenosine 3',5'-bisphosphate + H(+). The enzyme catalyses (24S)-hydroxycholesterol + 3'-phosphoadenylyl sulfate = (24S)-hydroxycholesterol 3-sulfate + adenosine 3',5'-bisphosphate + H(+). The catalysed reaction is 17beta-estradiol + 3'-phosphoadenylyl sulfate = 17beta-estradiol 3-sulfate + adenosine 3',5'-bisphosphate + H(+). It carries out the reaction 3beta-hydroxyandrost-5-en-17-one + 3'-phosphoadenylyl sulfate = dehydroepiandrosterone 3-sulfate + adenosine 3',5'-bisphosphate + H(+). It catalyses the reaction 4-ethylphenol + 3'-phosphoadenylyl sulfate = 4-ethylphenyl sulfate + adenosine 3',5'-bisphosphate + H(+). Its activity is regulated as follows. Inhibited by estradiol. Functionally, sulfotransferase that utilizes 3'-phospho-5'-adenylyl sulfate (PAPS) as sulfonate donor to catalyze the sulfate conjugation of estradiol and estrone. Is a key enzyme in estrogen homeostasis, the sulfation of estrogens leads to their inactivation. Also sulfates dehydroepiandrosterone (DHEA), pregnenolone, (24S)-hydroxycholesteroland xenobiotic compounds like ethinylestradiol, equalenin, diethyl stilbesterol and 1-naphthol at significantly lower efficiency. Does not sulfonate cortisol, testosterone and dopamine. May play a role in gut microbiota-host metabolic interaction. O-sulfonates 4-ethylphenol (4-EP), a dietary tyrosine-derived metabolite produced by gut bacteria. The product 4-EPS crosses the blood-brain barrier and may negatively regulate oligodendrocyte maturation and myelination, affecting the functional connectivity of different brain regions associated with the limbic system. This Cavia porcellus (Guinea pig) protein is Sulfotransferase 1E1 (SULT1E1).